We begin with the raw amino-acid sequence, 315 residues long: Gamma-hemolysin component C (315 aa).

Residues 1–29 form the signal peptide; the sequence is MLKNKILTTTLSVSLLAPLANPLLENAKA.

Belongs to the aerolysin family. In terms of assembly, toxicity requires sequential binding and synergistic association of a class S and a class F component which form heterooligomeric complexes. HlgB (class F) associates with either hlgA thus forming an AB toxin or with hlgC thus forming a CB toxin.

The protein resides in the secreted. Functionally, toxin that seems to act by forming pores in the membrane of the cell. Has a hemolytic and a leucotoxic activity. In Staphylococcus aureus (strain NCTC 8325 / PS 47), this protein is Gamma-hemolysin component C (hlgC).